Here is a 90-residue protein sequence, read N- to C-terminus: Auxin-responsive protein SAUR22 (90 aa).

The protein belongs to the ARG7 family.

The protein localises to the cell membrane. In terms of biological role, functions as a positive effector of cell expansion through modulation of auxin transport. The protein is Auxin-responsive protein SAUR22 of Arabidopsis thaliana (Mouse-ear cress).